Consider the following 489-residue polypeptide: Phosphoglucosamine mutase (489 aa).

Ser-136 functions as the Phosphoserine intermediate in the catalytic mechanism. The Mg(2+) site is built by Ser-136, Asp-275, Asp-277, and Asp-279. A Phosphoserine modification is found at Ser-136.

It belongs to the phosphohexose mutase family. The cofactor is Mg(2+). Activated by phosphorylation.

The enzyme catalyses alpha-D-glucosamine 1-phosphate = D-glucosamine 6-phosphate. Functionally, catalyzes the conversion of glucosamine-6-phosphate to glucosamine-1-phosphate. The polypeptide is Phosphoglucosamine mutase (Trichodesmium erythraeum (strain IMS101)).